Reading from the N-terminus, the 160-residue chain is ATP synthase subunit b (160 aa).

The helical transmembrane segment at 12–32 (ISFVLFVWFCMKYVWYPFISI) threads the bilayer.

It belongs to the ATPase B chain family. In terms of assembly, F-type ATPases have 2 components, F(1) - the catalytic core - and F(0) - the membrane proton channel. F(1) has five subunits: alpha(3), beta(3), gamma(1), delta(1), epsilon(1). F(0) has three main subunits: a(1), b(2) and c(10-14). The alpha and beta chains form an alternating ring which encloses part of the gamma chain. F(1) is attached to F(0) by a central stalk formed by the gamma and epsilon chains, while a peripheral stalk is formed by the delta and b chains.

Its subcellular location is the cell inner membrane. In terms of biological role, f(1)F(0) ATP synthase produces ATP from ADP in the presence of a proton or sodium gradient. F-type ATPases consist of two structural domains, F(1) containing the extramembraneous catalytic core and F(0) containing the membrane proton channel, linked together by a central stalk and a peripheral stalk. During catalysis, ATP synthesis in the catalytic domain of F(1) is coupled via a rotary mechanism of the central stalk subunits to proton translocation. Functionally, component of the F(0) channel, it forms part of the peripheral stalk, linking F(1) to F(0). This Blochmanniella pennsylvanica (strain BPEN) protein is ATP synthase subunit b.